We begin with the raw amino-acid sequence, 280 residues long: Beta-glucosyl-HMC-alpha-glucosyl-transferase (280 aa).

The protein operates within genetic information processing; DNA modification. Its function is as follows. Transfers a gentiobiosyl-group on a hydroxymethylcytosine residue in DNA. Is involved in a DNA modification process to protects the phage genome against its own nucleases and the host restriction endonuclease system. The sequence is that of Beta-glucosyl-HMC-alpha-glucosyl-transferase from Enterobacteria phage T6 (Bacteriophage T6).